The chain runs to 389 residues: 5-hydroxytryptamine receptor 1B (389 aa).

The disordered stretch occupies residues 1–27 (MEDAGTPCAPPPPAGSQTGAPPANLSS). At 1–45 (MEDAGTPCAPPPPAGSQTGAPPANLSSAPHNCSAEGYIYQDSIAL) the chain is on the extracellular side. Residues 15 to 27 (GSQTGAPPANLSS) show a composition bias toward polar residues. Residues asparagine 24 and asparagine 31 are each glycosylated (N-linked (GlcNAc...) asparagine). A helical transmembrane segment spans residues 46-71 (PWKVLLAILLALLTLATTLSNAFVIA). Topologically, residues 72 to 85 (TVYRTRKLHTPANY) are cytoplasmic. The chain crosses the membrane as a helical span at residues 86–110 (LIASLAVTDLLVSILVMPISTMYAV). At 111 to 118 (TGRWTLGQ) the chain is on the extracellular side. The helical transmembrane segment at 119 to 144 (VVCDLWLSSDITCCTASILHLCVIAL) threads the bilayer. Cysteine 121 and cysteine 198 form a disulfide bridge. Aspartate 128 and threonine 133 together coordinate ergotamine. The DRY motif; important for ligand-induced conformation changes and signaling signature appears at 145–147 (DRY). The Cytoplasmic segment spans residues 145–164 (DRYWAITDAVEYSAKRTPKR). A helical membrane pass occupies residues 165 to 183 (AAVMIALVWVFSISISLPP). The Extracellular segment spans residues 184 to 204 (FFWRQAKAEEEVSDCVVNTDH). Residue valine 200 participates in ergotamine binding. The chain crosses the membrane as a helical span at residues 205–228 (ILYTVYSTVGAFYFPTLLLIALYG). Topologically, residues 229-314 (RIYVEARSRI…AARERKATKT (86 aa)) are cytoplasmic. Residues 258-271 (DSPGSTSSVTSVNS) are compositionally biased toward polar residues. Residues 258-281 (DSPGSTSSVTSVNSRAPDVPSESG) are disordered. A helical membrane pass occupies residues 315-336 (LGIILGAFIVCWLPFFIISLVM). At 337–346 (PICKDACWFH) the chain is on the extracellular side. The chain crosses the membrane as a helical span at residues 347 to 369 (LAIFDFFTWLGYLNSLINPIIYT). An NPxxY motif; important for ligand-induced conformation changes and signaling motif is present at residues 364-368 (NPIIY). Residues 370–389 (MSNEDFKQAFHKLIRFKCAS) lie on the Cytoplasmic side of the membrane. Cysteine 387 carries S-palmitoyl cysteine lipidation.

Belongs to the G-protein coupled receptor 1 family. As to quaternary structure, homodimer. Heterodimer with HTR1D. Phosphorylated. Desensitization of the receptor may be mediated by its phosphorylation. In terms of processing, palmitoylated.

Its subcellular location is the cell membrane. Functionally, G-protein coupled receptor for 5-hydroxytryptamine (serotonin). Also functions as a receptor for ergot alkaloid derivatives, various anxiolytic and antidepressant drugs and other psychoactive substances, such as lysergic acid diethylamide (LSD). Ligand binding causes a conformation change that triggers signaling via guanine nucleotide-binding proteins (G proteins) and modulates the activity of downstream effectors, such as adenylate cyclase. HTR1B is coupled to G(i)/G(o) G alpha proteins and mediates inhibitory neurotransmission by inhibiting adenylate cyclase activity. Arrestin family members inhibit signaling via G proteins and mediate activation of alternative signaling pathways. Regulates the release of 5-hydroxytryptamine, dopamine and acetylcholine in the brain, and thereby affects neural activity, nociceptive processing, pain perception, mood and behavior. Besides, plays a role in vasoconstriction of cerebral arteries. The polypeptide is 5-hydroxytryptamine receptor 1B (HTR1B) (Vulpes vulpes (Red fox)).